The sequence spans 346 residues: Haptoglobin (346 aa).

A signal peptide spans 1–18; that stretch reads MRALGAVVTLLLWGQLFA. The Sushi domain occupies 31 to 87; the sequence is DSCPKPPEIENGYVEHLVRYRCQHYRLRTEGDGVYTLNSEKQWVNTAAGERLPECEA. 4 disulfide bridges follow: cysteine 52–cysteine 85, cysteine 89–cysteine 206, cysteine 249–cysteine 280, and cysteine 291–cysteine 321. One can recognise a Peptidase S1 domain in the interval 102–344; the sequence is IIGGSLDAKG…FLDWIQETMA (243 aa). Asparagine 147 and asparagine 181 each carry an N-linked (GlcNAc...) asparagine glycan. The interval 258-263 is interaction with CD163; sequence VPEKEG.

This sequence belongs to the peptidase S1 family. In terms of assembly, tetramer of two alpha and two beta chains; disulfide-linked. The hemoglobin/haptoglobin complex is composed of a haptoglobin dimer bound to two hemoglobin alpha-beta dimers. Interacts with CD163. Interacts with ERGIC3. Expressed by the liver and secreted in plasma.

The protein resides in the secreted. Functionally, as a result of hemolysis, hemoglobin is found to accumulate in the kidney and is secreted in the urine. Haptoglobin captures, and combines with free plasma hemoglobin to allow hepatic recycling of heme iron and to prevent kidney damage. Haptoglobin also acts as an antioxidant, has antibacterial activity and plays a role in modulating many aspects of the acute phase response. Hemoglobin/haptoglobin complexes are rapidly cleared by the macrophage CD163 scavenger receptor expressed on the surface of liver Kupfer cells through an endocytic lysosomal degradation pathway. The sequence is that of Haptoglobin (HP) from Mesocricetus auratus (Golden hamster).